Consider the following 81-residue polypeptide: Accessory gland protein Acp63F (81 aa).

Residues 1–16 (MKAIIVFILFISSVHA) form the signal peptide.

As to expression, main cells of accessory gland and seminal fluid.

It is found in the secreted. In terms of biological role, responsible for physiological and behavioral changes in mated female flies. The chain is Accessory gland protein Acp63F (Acp63F) from Drosophila melanogaster (Fruit fly).